Reading from the N-terminus, the 162-residue chain is Ribonuclease P protein component (162 aa).

The tract at residues 1-62 is disordered; that stretch reads MDEKDLATQP…GPPKAGGRLL (62 aa). A compositionally biased stretch (basic and acidic residues) spans 21–36; it reads GPHEDPRRQERAEAQA.

The protein belongs to the RnpA family. As to quaternary structure, consists of a catalytic RNA component (M1 or rnpB) and a protein subunit.

The enzyme catalyses Endonucleolytic cleavage of RNA, removing 5'-extranucleotides from tRNA precursor.. RNaseP catalyzes the removal of the 5'-leader sequence from pre-tRNA to produce the mature 5'-terminus. It can also cleave other RNA substrates such as 4.5S RNA. The protein component plays an auxiliary but essential role in vivo by binding to the 5'-leader sequence and broadening the substrate specificity of the ribozyme. This chain is Ribonuclease P protein component, found in Thermus aquaticus.